The primary structure comprises 67 residues: Large ribosomal subunit protein bL35 (67 aa).

Belongs to the bacterial ribosomal protein bL35 family.

This is Large ribosomal subunit protein bL35 from Sinorhizobium medicae (strain WSM419) (Ensifer medicae).